We begin with the raw amino-acid sequence, 598 residues long: Proline--tRNA ligase (598 aa).

Belongs to the class-II aminoacyl-tRNA synthetase family. ProS type 1 subfamily. As to quaternary structure, homodimer.

The protein resides in the cytoplasm. The enzyme catalyses tRNA(Pro) + L-proline + ATP = L-prolyl-tRNA(Pro) + AMP + diphosphate. Catalyzes the attachment of proline to tRNA(Pro) in a two-step reaction: proline is first activated by ATP to form Pro-AMP and then transferred to the acceptor end of tRNA(Pro). As ProRS can inadvertently accommodate and process non-cognate amino acids such as alanine and cysteine, to avoid such errors it has two additional distinct editing activities against alanine. One activity is designated as 'pretransfer' editing and involves the tRNA(Pro)-independent hydrolysis of activated Ala-AMP. The other activity is designated 'posttransfer' editing and involves deacylation of mischarged Ala-tRNA(Pro). The misacylated Cys-tRNA(Pro) is not edited by ProRS. The protein is Proline--tRNA ligase of Rippkaea orientalis (strain PCC 8801 / RF-1) (Cyanothece sp. (strain PCC 8801)).